A 139-amino-acid chain; its full sequence is Large ribosomal subunit protein uL16 (139 aa).

Positions 1 to 20 are enriched in basic residues; that stretch reads MLIPRRVKHRKQHHPKRRGQ. Residues 1 to 25 form a disordered region; sequence MLIPRRVKHRKQHHPKRRGQAKGGT.

It belongs to the universal ribosomal protein uL16 family. Part of the 50S ribosomal subunit.

In terms of biological role, binds 23S rRNA and is also seen to make contacts with the A and possibly P site tRNAs. This chain is Large ribosomal subunit protein uL16, found in Streptomyces avermitilis (strain ATCC 31267 / DSM 46492 / JCM 5070 / NBRC 14893 / NCIMB 12804 / NRRL 8165 / MA-4680).